The sequence spans 841 residues: Putative helicase R592 (841 aa).

One can recognise a Helicase ATP-binding domain in the interval S72–Q309. D85–T92 contacts ATP. Over residues K195–G205 the composition is skewed to basic residues. A disordered region spans residues K195–D215. Polar residues predominate over residues S206 to D215. Residues D266–D269 carry the DEAD box motif. Residues Q413–C450 adopt a coiled-coil conformation. Residues C451–R491 form an RING-type; degenerate zinc finger. In terms of domain architecture, Helicase C-terminal spans V531–N682. A disordered region spans residues P678–V841. Over residues L681–V697 the composition is skewed to acidic residues. Basic and acidic residues predominate over residues E698–S725. Over residues S726 to V749 the composition is skewed to basic residues. 2 stretches are compositionally biased toward acidic residues: residues D765–D774 and S782–I804. Composition is skewed to basic residues over residues K809 to K821 and T828 to V841.

In Acanthamoeba polyphaga mimivirus (APMV), this protein is Putative helicase R592.